A 249-amino-acid polypeptide reads, in one-letter code: Transmembrane protein 150C (249 aa).

Residues Met-1 to Trp-9 are Cytoplasmic-facing. Residues Met-10–Ile-30 form a helical membrane-spanning segment. The Extracellular segment spans residues Ala-31–Ala-64. Residues Ser-65 to Leu-85 form a helical membrane-spanning segment. Over Arg-86–Pro-97 the chain is Cytoplasmic. The helical transmembrane segment at Trp-98–Gly-118 threads the bilayer. Residues Asn-119–Asn-130 are Extracellular-facing. The helical transmembrane segment at Val-131 to Thr-151 threads the bilayer. Residues Leu-152–Val-168 lie on the Cytoplasmic side of the membrane. Residues Ile-169–Ile-189 traverse the membrane as a helical segment. Residues His-190 to Tyr-192 are Extracellular-facing. The helical transmembrane segment at Ala-193–Val-213 threads the bilayer. The Cytoplasmic segment spans residues Glu-214 to Val-249.

It belongs to the DRAM/TMEM150 family.

The protein resides in the cell membrane. It localises to the lysosome membrane. The catalysed reaction is Ca(2+)(in) = Ca(2+)(out). It catalyses the reaction Na(+)(in) = Na(+)(out). The enzyme catalyses K(+)(in) = K(+)(out). It carries out the reaction Mg(2+)(in) = Mg(2+)(out). Functionally, nonselective cationic channel with high permeability to Ca(2+). Component of a mechanosensitive cation channel, confers mechanically activated (MA) currents with slow inactivation kinetics. May contribute to proprioception. The polypeptide is Transmembrane protein 150C (Homo sapiens (Human)).